The chain runs to 234 residues: Glycoprotein BDLF3 (234 aa).

Positions 1–28 (MAHARDKAGAVMAMILICETSLIWTSSG) are cleaved as a signal peptide. A disordered region spans residues 29–62 (SSTASAGNVTGTTAVTTPSPSASGPSTNQSTTLT). Residues asparagine 36, asparagine 56, asparagine 77, asparagine 96, asparagine 101, asparagine 110, asparagine 127, asparagine 144, and asparagine 159 are each glycosylated (N-linked (GlcNAc...) asparagine; by host). Positions 116-138 (AGTGTSTGVTSNVTTRSSSTTSA) are disordered. Residues 187–207 (LVFVGLTFLMLILIFAAGLMM) traverse the membrane as a helical segment.

This sequence belongs to the Epstein-Barr virus BDLF3 protein family.

The protein localises to the membrane. This is Glycoprotein BDLF3 from Homo sapiens (Human).